The chain runs to 498 residues: Putative phosphotransferase 057R (498 aa).

The protein is Putative phosphotransferase 057R of Dryophytes versicolor (chameleon treefrog).